Here is a 34-residue protein sequence, read N- to C-terminus: MFSSFNVLIILRGFVRLKKWFNIDSELAFFFPKK.

In Proteus vulgaris, this protein is Tryptophanase operon leader peptide (tnaL).